The following is a 160-amino-acid chain: Endoribonuclease YbeY (160 aa).

Residues histidine 111, histidine 115, and histidine 121 each contribute to the Zn(2+) site.

It belongs to the endoribonuclease YbeY family. It depends on Zn(2+) as a cofactor.

It is found in the cytoplasm. In terms of biological role, single strand-specific metallo-endoribonuclease involved in late-stage 70S ribosome quality control and in maturation of the 3' terminus of the 16S rRNA. This Stutzerimonas stutzeri (strain A1501) (Pseudomonas stutzeri) protein is Endoribonuclease YbeY.